We begin with the raw amino-acid sequence, 339 residues long: Undecaprenyl-phosphate 4-deoxy-4-formamido-L-arabinose transferase (339 aa).

2 helical membrane-spanning segments follow: residues 235 to 255 (LSLV…FLLV) and 269 to 289 (LFVL…GMGL).

It belongs to the glycosyltransferase 2 family.

The protein localises to the cell inner membrane. The enzyme catalyses UDP-4-deoxy-4-formamido-beta-L-arabinose + di-trans,octa-cis-undecaprenyl phosphate = 4-deoxy-4-formamido-alpha-L-arabinopyranosyl di-trans,octa-cis-undecaprenyl phosphate + UDP. The protein operates within glycolipid biosynthesis; 4-amino-4-deoxy-alpha-L-arabinose undecaprenyl phosphate biosynthesis; 4-amino-4-deoxy-alpha-L-arabinose undecaprenyl phosphate from UDP-4-deoxy-4-formamido-beta-L-arabinose and undecaprenyl phosphate: step 1/2. It functions in the pathway bacterial outer membrane biogenesis; lipopolysaccharide biosynthesis. Functionally, catalyzes the transfer of 4-deoxy-4-formamido-L-arabinose from UDP to undecaprenyl phosphate. The modified arabinose is attached to lipid A and is required for resistance to polymyxin and cationic antimicrobial peptides. The polypeptide is Undecaprenyl-phosphate 4-deoxy-4-formamido-L-arabinose transferase (Pseudomonas paraeruginosa (strain DSM 24068 / PA7) (Pseudomonas aeruginosa (strain PA7))).